An 84-amino-acid chain; its full sequence is Delta-conotoxin-like Bt6.4 (84 aa).

Residues 1–22 form the signal peptide; that stretch reads MKLTCMVIVAVLFLTAWTSVMA. A propeptide spanning residues 23-57 is cleaved from the precursor; it reads DGSINRPDIAEGWQKFFSKARDEMKNRAASELNKR. Intrachain disulfides connect Cys58–Cys74, Cys65–Cys78, and Cys73–Cys82.

It belongs to the conotoxin O1 superfamily. As to expression, expressed by the venom duct.

The protein localises to the secreted. Its function is as follows. This toxin activates voltage-gated sodium channels. It shifts the voltage-dependence of activation to more hyperpolarized potentials but has only little effect on channel inactivation. It is active on Nav1.3/SCN3A (EC(50)=3.98 nM), Nav1.4/SCN4A (EC(50)=4.99 nM), Nav1.6/SCN8A (EC(50)=1.27 nM) and Nav1.7/SCN9A (EC(50)=2.42 nM) voltage-gated sodium channels. In vivo, it induces nocifensive or pain-like behaviors in mice when injected intraplantarly. This chain is Delta-conotoxin-like Bt6.4, found in Conus betulinus (Beech cone).